The chain runs to 228 residues: R-spondin-4 (228 aa).

The signal sequence occupies residues 1–19; sequence MRAPLCLLLLLAHAVDMLA. An N-linked (GlcNAc...) asparagine glycan is attached at asparagine 34. 11 disulfides stabilise this stretch: cysteine 35-cysteine 41, cysteine 38-cysteine 47, cysteine 50-cysteine 69, cysteine 73-cysteine 88, cysteine 91-cysteine 98, cysteine 95-cysteine 104, cysteine 107-cysteine 118, cysteine 122-cysteine 135, cysteine 139-cysteine 181, cysteine 150-cysteine 157, and cysteine 190-cysteine 196. An FU repeat occupies 85 to 128; sequence ANRCKKCGATCESCFSQDFCIRCKRRFHLYKGKCLPSCPPGTLT. In terms of domain architecture, TSP type-1 spans 138–197; it reads ECEPSPWGSWSPCIHNGKTCGSGWGLETRVREAGPAKQEETASCRVLSESRKCPIKRLCP. The interval 193–228 is disordered; it reads KRLCPGERNPRQKNRKDRRQRKDRKLERRPHQRGSQ. The segment covering 203–228 has biased composition (basic residues); that stretch reads RQKNRKDRRQRKDRKLERRPHQRGSQ.

It belongs to the R-spondin family. Binds heparin. Interacts with LGR4, LGR5 and LGR6.

It localises to the secreted. Functionally, activator of the canonical Wnt signaling pathway by acting as a ligand for LGR4-6 receptors. Upon binding to LGR4-6 (LGR4, LGR5 or LGR6), LGR4-6 associate with phosphorylated LRP6 and frizzled receptors that are activated by extracellular Wnt receptors, triggering the canonical Wnt signaling pathway to increase expression of target genes. Also regulates the canonical Wnt/beta-catenin-dependent pathway and non-canonical Wnt signaling by acting as an inhibitor of ZNRF3, an important regulator of the Wnt signaling pathway. The protein is R-spondin-4 (Rspo4) of Mus musculus (Mouse).